A 340-amino-acid polypeptide reads, in one-letter code: Delta-aminolevulinic acid dehydratase (340 aa).

C133, C135, and C143 together coordinate Zn(2+). K210 serves as the catalytic Schiff-base intermediate with substrate. 5-aminolevulinate contacts are provided by R220 and R232. K263 serves as the catalytic Schiff-base intermediate with substrate. The 5-aminolevulinate site is built by S290 and Y329.

Belongs to the ALAD family. As to quaternary structure, homooctamer. Zn(2+) is required as a cofactor.

It catalyses the reaction 2 5-aminolevulinate = porphobilinogen + 2 H2O + H(+). It functions in the pathway porphyrin-containing compound metabolism; protoporphyrin-IX biosynthesis; coproporphyrinogen-III from 5-aminolevulinate: step 1/4. Its function is as follows. Catalyzes an early step in the biosynthesis of tetrapyrroles. Binds two molecules of 5-aminolevulinate per subunit, each at a distinct site, and catalyzes their condensation to form porphobilinogen. The sequence is that of Delta-aminolevulinic acid dehydratase (HEM2) from Candida glabrata (strain ATCC 2001 / BCRC 20586 / JCM 3761 / NBRC 0622 / NRRL Y-65 / CBS 138) (Yeast).